We begin with the raw amino-acid sequence, 363 residues long: Beta-1,3-N-acetylglucosaminyltransferase lunatic fringe (363 aa).

Residues 1–8 (MLKSCGRK) are Cytoplasmic-facing. A helical; Signal-anchor for type II membrane protein membrane pass occupies residues 9–29 (LLLSLVGSMFTCLLVLMVEPP). Residues 30-363 (GRPGLARGEA…TPWCPSNVVY (334 aa)) lie on the Lumenal side of the membrane. Arginine 113 lines the substrate pocket. Residue asparagine 151 is glycosylated (N-linked (GlcNAc...) asparagine). 2 cysteine pairs are disulfide-bonded: cysteine 152–cysteine 163 and cysteine 181–cysteine 244. Residue aspartate 185 coordinates substrate. Aspartate 186 contributes to the Mn(2+) binding site. The active site involves aspartate 274. Position 298 (histidine 298) interacts with Mn(2+). Cysteine 348 and cysteine 357 are joined by a disulfide.

Belongs to the glycosyltransferase 31 family. Requires Mn(2+) as cofactor. The cofactor is Co(2+). Post-translationally, a soluble form may be derived from the membrane form by proteolytic processing.

Its subcellular location is the golgi apparatus membrane. It catalyses the reaction 3-O-(alpha-L-fucosyl)-L-threonyl-[EGF-like domain protein] + UDP-N-acetyl-alpha-D-glucosamine = 3-O-(N-acetyl-beta-D-glucosaminyl-(1-&gt;3)-alpha-L-fucosyl)-L-threonyl-[EGF-like domain protein] + UDP + H(+). It carries out the reaction 3-O-(alpha-L-fucosyl)-L-seryl-[EGF-like domain protein] + UDP-N-acetyl-alpha-D-glucosamine = 3-O-(N-acetyl-beta-D-glucosaminyl-(1-&gt;3)-alpha-L-fucosyl)-L-seryl-[EGF-like domain protein] + UDP + H(+). In terms of biological role, glycosyltransferase that initiates the elongation of O-linked fucose residues attached to EGF-like repeats in the extracellular domain of Notch molecules. Essential mediator of somite segmentation and patterning. The polypeptide is Beta-1,3-N-acetylglucosaminyltransferase lunatic fringe (LFNG) (Gallus gallus (Chicken)).